A 267-amino-acid polypeptide reads, in one-letter code: Putative phosphoenolpyruvate synthase regulatory protein (267 aa).

Residue 147 to 154 (GVSRSGKT) participates in ADP binding.

The protein belongs to the pyruvate, phosphate/water dikinase regulatory protein family. PSRP subfamily.

It carries out the reaction [pyruvate, water dikinase] + ADP = [pyruvate, water dikinase]-phosphate + AMP + H(+). The catalysed reaction is [pyruvate, water dikinase]-phosphate + phosphate + H(+) = [pyruvate, water dikinase] + diphosphate. Bifunctional serine/threonine kinase and phosphorylase involved in the regulation of the phosphoenolpyruvate synthase (PEPS) by catalyzing its phosphorylation/dephosphorylation. In Cupriavidus necator (strain ATCC 17699 / DSM 428 / KCTC 22496 / NCIMB 10442 / H16 / Stanier 337) (Ralstonia eutropha), this protein is Putative phosphoenolpyruvate synthase regulatory protein.